We begin with the raw amino-acid sequence, 122 residues long: Urease subunit beta (122 aa).

This sequence belongs to the urease beta subunit family. As to quaternary structure, heterotrimer of UreA (gamma), UreB (beta) and UreC (alpha) subunits. Three heterotrimers associate to form the active enzyme.

The protein localises to the cytoplasm. The enzyme catalyses urea + 2 H2O + H(+) = hydrogencarbonate + 2 NH4(+). It functions in the pathway nitrogen metabolism; urea degradation; CO(2) and NH(3) from urea (urease route): step 1/1. This Lysinibacillus sphaericus (strain C3-41) protein is Urease subunit beta.